We begin with the raw amino-acid sequence, 214 residues long: 3-isopropylmalate dehydratase small subunit (214 aa).

Belongs to the LeuD family. LeuD type 1 subfamily. Heterodimer of LeuC and LeuD.

The enzyme catalyses (2R,3S)-3-isopropylmalate = (2S)-2-isopropylmalate. Its pathway is amino-acid biosynthesis; L-leucine biosynthesis; L-leucine from 3-methyl-2-oxobutanoate: step 2/4. Functionally, catalyzes the isomerization between 2-isopropylmalate and 3-isopropylmalate, via the formation of 2-isopropylmaleate. In Pseudomonas entomophila (strain L48), this protein is 3-isopropylmalate dehydratase small subunit.